The chain runs to 272 residues: uncharacterized protein (272 aa).

Residue glutamate 163 is part of the active site.

It belongs to the glycosyl hydrolase 25 family.

This is an uncharacterized protein from Escherichia coli O157:H7.